Reading from the N-terminus, the 232-residue chain is Mediator of RNA polymerase II transcription subunit 18 (232 aa).

The protein belongs to the Mediator complex subunit 18 family. In terms of assembly, component of the Mediator complex.

The protein resides in the nucleus. In terms of biological role, component of the Mediator complex, a coactivator involved in the regulated transcription of nearly all RNA polymerase II-dependent genes. Mediator functions as a bridge to convey information from gene-specific regulatory proteins to the basal RNA polymerase II transcription machinery. Mediator is recruited to promoters by direct interactions with regulatory proteins and serves as a scaffold for the assembly of a functional preinitiation complex with RNA polymerase II and the general transcription factors. This Caenorhabditis elegans protein is Mediator of RNA polymerase II transcription subunit 18 (mdt-18).